We begin with the raw amino-acid sequence, 291 residues long: Methylsterol monooxygenase 1 (291 aa).

2 helical membrane passes run 55-75 (LIVH…FQFL) and 100-120 (MLLF…YYFT). The Fatty acid hydroxylase domain occupies 145 to 274 (CAVIEDTWHY…FTWWDRLFDT (130 aa)). The Histidine box-1 motif lies at 157-161 (HRALH). Residues 170–174 (HKVHH) carry the Histidine box-2 motif. Residues 199–219 (FFIGTMVFCNHMILLWAWVTF) form a helical membrane-spanning segment. The short motif at 249–255 (FHDFHHM) is the Histidine box-3 element.

Belongs to the sterol desaturase family. Fe cation is required as a cofactor.

The protein localises to the endoplasmic reticulum membrane. It catalyses the reaction 4,4-dimethyl-5alpha-cholest-7-en-3beta-ol + 6 Fe(II)-[cytochrome b5] + 3 O2 + 5 H(+) = 4alpha-carboxy-4beta-methyl-5alpha-cholest-7-ene-3beta-ol + 6 Fe(III)-[cytochrome b5] + 4 H2O. The protein operates within steroid biosynthesis; zymosterol biosynthesis; zymosterol from lanosterol: step 3/6. Catalyzes the first step in the removal of the two C-4 methyl groups of 4,4-dimethylzymosterol. The sequence is that of Methylsterol monooxygenase 1 (msmo1) from Danio rerio (Zebrafish).